Here is a 184-residue protein sequence, read N- to C-terminus: Ribosome maturation factor RimM (184 aa).

Positions 93 to 165 constitute a PRC barrel domain; it reads DEGWYEHELV…YILITPPSGL (73 aa).

It belongs to the RimM family. Binds ribosomal protein uS19.

The protein localises to the cytoplasm. An accessory protein needed during the final step in the assembly of 30S ribosomal subunit, possibly for assembly of the head region. Essential for efficient processing of 16S rRNA. May be needed both before and after RbfA during the maturation of 16S rRNA. It has affinity for free ribosomal 30S subunits but not for 70S ribosomes. In Paenarthrobacter aurescens (strain TC1), this protein is Ribosome maturation factor RimM.